Here is a 3010-residue protein sequence, read N- to C-terminus: Genome polyprotein (3010 aa).

Ser-2 is subject to N-acetylserine; by host. The interaction with STAT1 stretch occupies residues 2-23 (STNPKPQRKTKRNTYRRPQDVK). Positions 2–58 (STNPKPQRKTKRNTYRRPQDVKFPGGGQIVGGVYVLPRRGPTLGVRATRKTSERSQP) are interaction with EIF2AK2/PKR. An interaction with DDX3X region spans residues 2-59 (STNPKPQRKTKRNTYRRPQDVKFPGGGQIVGGVYVLPRRGPTLGVRATRKTSERSQPR). The tract at residues 2-75 (STNPKPQRKT…PKARRPEGRA (74 aa)) is disordered. At 2–168 (STNPKPQRKT…EDGVNYATGN (167 aa)) the chain is on the cytoplasmic side. Short sequence motifs (nuclear localization signal) lie at residues 5 to 13 (PKPQRKTKR) and 38 to 43 (PRRGPT). Basic residues predominate over residues 7 to 16 (PQRKTKRNTY). Position 53 is a phosphoserine; by host (Ser-53). 2 short sequence motifs (nuclear localization signal) span residues 58–64 (PRGRRQP) and 66–71 (PKARRP). Residues 58–68 (PRGRRQPIPKA) are compositionally biased toward basic residues. Ser-99 bears the Phosphoserine; by host mark. The segment at 112–152 (PRRRSRNLGKVIDTLTCGFADLMGYIPLVGAPLGGAARALA) is important for endoplasmic reticulum and mitochondrial localization. Phosphoserine; by host PKA is present on Ser-116. Positions 122-173 (VIDTLTCGFADLMGYIPLVGAPLGGAARALAHGVRVLEDGVNYATGNLPGCS) are interaction with APOA2. An important for lipid droplets localization region spans residues 164-167 (YATG). Residues 169 to 189 (LPGCSFSIFLLALLSCLTIPA) traverse the membrane as a helical segment. A propeptide spans 178–191 (LLALLSCLTIPASA) (ER anchor for the core protein, removed in mature form by host signal peptidase). Over 190 to 358 (SAYQVRNASG…AGAHWGVLAG (169 aa)) the chain is Lumenal. Asn-196, Asn-209, Asn-234, and Asn-250 each carry an N-linked (GlcNAc...) asparagine; by host glycan. Residues 265–296 (LVGAAAFCSAMYVGDLCGSVFLVSQLFTFSPR) form an important for fusion region. Residue Asn-305 is glycosylated (N-linked (GlcNAc...) asparagine; by host). A helical transmembrane segment spans residues 359–379 (LAYYSMVGNWAKVLIVMLLFA). At 380-725 (GVDGVTYTTG…WEYIVLLFLL (346 aa)) the chain is on the lumenal side. The tract at residues 385 to 411 (TYTTGGSQARHTQSVTSFFTQGPAQRI) is HVR1. N-linked (GlcNAc...) (high mannose) asparagine; by host glycans are attached at residues Asn-417, Asn-423, Asn-430, and Asn-448. 4 cysteine pairs are disulfide-bonded: Cys-429-Cys-552, Cys-452-Cys-459, Cys-486-Cys-494, and Cys-503-Cys-508. Residues 474–479 (YTEPRD) form an HVR2 region. The CD81-binding 1 stretch occupies residues 480–493 (LDQRPYCWHYAPRQ). Asn-532 carries an N-linked (GlcNAc...) (high mannose) asparagine; by host glycan. Asn-540 carries an N-linked (GlcNAc...) asparagine; by host glycan. Residues 544–551 (PPQGNWFG) form a CD81-binding 2 region. Asn-556 is a glycosylation site (N-linked (GlcNAc...) (high mannose) asparagine; by host). A disulfide bridge connects residues Cys-564 and Cys-569. A glycan (N-linked (GlcNAc...) (high mannose) asparagine; by host) is linked at Asn-576. Disulfide bonds link Cys-581/Cys-585, Cys-597/Cys-620, and Cys-607/Cys-644. Asn-623 and Asn-645 each carry an N-linked (GlcNAc...) (high mannose) asparagine; by host glycan. Residues Cys-652 and Cys-677 are joined by a disulfide bond. Residues 660-671 (SELSPLLLSTTE) are PKR/eIF2-alpha phosphorylation homology domain (PePHD). A helical transmembrane segment spans residues 726–746 (LADARVCACLWMMLLIAQAEA). Residues 747–757 (ALENLVVLNAA) are Lumenal-facing. A helical transmembrane segment spans residues 758 to 778 (SLAGADGILSFLVFFCAAWYI). Over 779–781 (KGR) the chain is Cytoplasmic. The chain crosses the membrane as a helical span at residues 782–803 (LVPGAAYALYGVWPLLLLLLAL). Residues 804–813 (PPRAYAMDRE) are Lumenal-facing. Residues 814–834 (MAASCGGVVFVGLILLTLSPH) traverse the membrane as a helical segment. The Cytoplasmic segment spans residues 835 to 838 (YKVF). A helical membrane pass occupies residues 839–859 (LARLIWWLQYFITRAEAHLCV). Topologically, residues 860-881 (WVPPLNVRGGRDAIILLTCAAH) are lumenal. The chain crosses the membrane as a helical span at residues 882–902 (PELIFDITKLLLAILGPLMVL). The Peptidase C18 domain occupies 903–1026 (QAAITAMPYF…SIEGQGWRLL (124 aa)). The Cytoplasmic segment spans residues 903–1657 (QAAITAMPYF…CMSADLEVVT (755 aa)). The tract at residues 904–1206 (AAITAMPYFV…PVESMETTMR (303 aa)) is protease NS2-3. Cys-922 carries the S-palmitoyl cysteine; by host lipid modification. Residues 929 to 949 (AGGHYVQMAFMKLAALTGTYV) form an interaction with host SCPS1 region. Active-site for protease NS2 activity; shared with dimeric partner residues include His-952, Glu-972, and Cys-993. The 182-residue stretch at 1027–1208 (APITAYAQQT…ESMETTMRSP (182 aa)) folds into the Peptidase S29 domain. Active-site charge relay system; for serine protease NS3 activity residues include His-1083 and Asp-1107. Zn(2+) contacts are provided by Cys-1123 and Cys-1125. The Charge relay system; for serine protease NS3 activity role is filled by Ser-1165. Zn(2+)-binding residues include Cys-1171 and His-1175. The Helicase ATP-binding domain maps to 1217 to 1369 (PAVPQTFQVA…PNIEEVALSN (153 aa)). 1230–1237 (APTGSGKS) lines the ATP pocket. Residues Ser-1237 and Glu-1317 each coordinate Mg(2+). The DECH box motif lies at 1316–1319 (DECH). The RNA-binding stretch occupies residues 1486–1497 (QRRGRTGRGRGG). Residues 1658 to 1678 (STWVLVGGVLAALAAYCLTTG) traverse the membrane as a helical segment. The NS3-binding stretch occupies residues 1679–1690 (SVVIVGRIILSG). Over 1679-1805 (SVVIVGRIIL…SITSPLTTQN (127 aa)) the chain is Cytoplasmic. A helical transmembrane segment spans residues 1806–1824 (TLLFNILGGWVAAQLAPPS). The Lumenal segment spans residues 1825 to 1828 (AASA). A helical membrane pass occupies residues 1829–1849 (FVGAGIAGAAIGSIGLGKVLV). Residue Asp-1850 is a topological domain, cytoplasmic. The chain crosses the membrane as a helical span at residues 1851–1871 (ILAGYGAGVAGALVAFKVMSG). Topologically, residues 1872-1881 (EAPSAEDLVN) are lumenal. A helical transmembrane segment spans residues 1882-1902 (LLPAILSPGALVVGVVCAAIL). Residues 1903–1972 (RRHVGPGEGA…WINEDCSTPC (70 aa)) are Cytoplasmic-facing. S-palmitoyl cysteine; by host attachment occurs at residues Cys-1968 and Cys-1972. The stretch at 1973 to 2002 (SGSWLKDVWDWICTVLTDFKTWLQSKLLPK) is an intramembrane region. Residues 2003-2989 (LPGVPFFSCQ…YHSLSRARPR (987 aa)) are Cytoplasmic-facing. Residues Cys-2011, Cys-2029, Cys-2031, and Cys-2052 each contribute to the Zn(2+) site. Positions 2120–2208 (EFFTELDGVR…ASSSASQLSA (89 aa)) are FKBP8-binding. The transcriptional activation stretch occupies residues 2120-2332 (EFFTELDGVR…PIPPPRKKRT (213 aa)). An interaction with non-structural protein 4A region spans residues 2135-2139 (PACRP). The interval 2187–2220 (KRRLARGSPPSLASSSASQLSAPSLKATCTTHHD) is disordered. An interaction with host SKP2 region spans residues 2189–2441 (RLARGSPPSL…PCAAEESKLP (253 aa)). Ser-2194 carries the post-translational modification Phosphoserine; by host; in p56. The segment covering 2194 to 2211 (SPPSLASSSASQLSAPSL) has biased composition (low complexity). Ser-2197, Ser-2201, Ser-2204, Ser-2207, and Ser-2210 each carry phosphoserine; by host; in p58. Residues 2210–2249 (SLKATCTTHHDSPDADLIEANLLWRQEMGGNITRVESENK) form an ISDR region. The interval 2210 to 2275 (SLKATCTTHH…REVSVAAEIL (66 aa)) is interaction with EIF2AK2/PKR. The segment at 2249–2306 (KVVILDSFDPLRAEEDEREVSVAAEILRKSKKFPPALPIWARPDYNPPLLESWKSPDY) is NS4B-binding. The SH3-binding motif lies at 2322-2325 (PPIP). A Nuclear localization signal motif is present at residues 2326 to 2334 (PPRKKRTVV). A Glycyl lysine isopeptide (Lys-Gly) (interchain with G-Cter in ubiquitin) cross-link involves residue Lys-2350. Residues 2351–2371 (TFGSSGSSAVDSGTATAPPDQ) are compositionally biased toward polar residues. A disordered region spans residues 2351–2408 (TFGSSGSSAVDSGTATAPPDQTSDDGDKESDVESYSSMPPLEGEPGDPDLSDGSWSTV). The tract at residues 2354-2377 (SSGSSAVDSGTATAPPDQTSDDGD) is V3. Residues 2372 to 2382 (TSDDGDKESDV) show a composition bias toward acidic residues. 2 positions are modified to phosphoserine; by host: Ser-2448 and Ser-2461. One can recognise a RdRp catalytic domain in the interval 2633-2751 (PMGFSYDTRC…ICESAGTQED (119 aa)). Mg(2+) contacts are provided by Asp-2639, Asp-2737, and Asp-2738. Residues 2990 to 3010 (WFMWCLLLLSVGVGIYLLPNR) form a helical membrane-spanning segment.

Belongs to the hepacivirus polyprotein family. Homooligomer. Interacts with E1 (via C-terminus). Interacts with the non-structural protein 5A. Interacts (via N-terminus) with host STAT1 (via SH2 domain); this interaction results in decreased STAT1 phosphorylation and ubiquitin-mediated proteasome-dependent STAT1 degradation, leading to decreased IFN-stimulated gene transcription. Interacts with host STAT3; this interaction constitutively activates STAT3. Interacts with host LTBR receptor. Interacts with host TNFRSF1A receptor and possibly induces apoptosis. Interacts with host HNRPK. Interacts with host YWHAE. Interacts with host UBE3A/E6AP. Interacts with host DDX3X. Interacts with host APOA2. Interacts with host RXRA protein. Interacts with host SP110 isoform 3/Sp110b; this interaction sequesters the transcriptional corepressor SP110 away from the nucleus. Interacts with host CREB3 nuclear transcription protein; this interaction triggers cell transformation. Interacts with host ACY3. Interacts with host C1QR1. Interacts with host RBM24; this interaction, which enhances the interaction of the mature core protein with 5'-UTR, may inhibit viral translation and favor replication. Interacts with host EIF2AK2/PKR; this interaction induces the autophosphorylation of EIF2AK2. Part of the viral assembly initiation complex composed of NS2, E1, E2, NS3, NS4A, NS5A and the mature core protein. As to quaternary structure, forms a heterodimer with envelope glycoprotein E2. Interacts with mature core protein. Interacts with protease NS2. The heterodimer E1/E2 interacts with host CLDN1; this interaction plays a role in viral entry into host cell. Interacts with host SPSB2 (via C-terminus). Part of the viral assembly initiation complex composed of NS2, E1, E2, NS3, NS4A, NS5A and the mature core protein. Interacts with host NEURL3; this interaction prevents E1 binding to glycoprotein E2. In terms of assembly, forms a heterodimer with envelope glycoprotein E1. Interacts with host CD81 and SCARB1 receptors; these interactions play a role in viral entry into host cell. Interacts with host EIF2AK2/PKR; this interaction inhibits EIF2AK2 and probably allows the virus to evade the innate immune response. Interacts with host CD209/DC-SIGN and CLEC4M/DC-SIGNR. Interact with host SPCS1; this interaction is essential for viral particle assembly. Interacts with protease NS2. The heterodimer E1/E2 interacts with host CLDN1; this interaction plays a role in viral entry into host cell. Part of the viral assembly initiation complex composed of NS2, E1, E2, NS3, NS4A, NS5A and the mature core protein. Interacts with host SLC3A2/4F2hc; the interaction may facilitate viral entry into host cell. Interacts with human PLSCR1. Homohexamer. Homoheptamer. Interacts with protease NS2. As to quaternary structure, homodimer. Interacts with host SPCS1; this interaction is essential for viral particle assembly. Interacts with envelope glycoprotein E1. Interacts with envelope glycoprotein E2. Interacts with viroporin p7. Interacts with serine protease/helicase NS3. Part of the replication complex composed of NS2, NS3, NS4A, NS4B, NS5A and the RNA-directed RNA polymerase embedded in an ER-derived membranous web. Part of the viral assembly initiation complex composed of NS2, E1, E2, NS3, NS4A, NS5A and the mature core protein. In terms of assembly, interacts with protease NS2. Interacts with non-structural protein 4A; this interaction stabilizes the folding of NS3 serine protease. NS3-NS4A interaction is essential for NS3 activation and allows membrane anchorage of the latter. NS3/NS4A complex also prevents phosphorylation of host IRF3, thus preventing the establishment of dsRNA induced antiviral state. Interacts with host MAVS; this interaction leads to the cleavage and inhibition of host MAVS. Interacts with host TICAM1; this interaction leads to the cleavage and inhibition of host TICAM1. Interacts with host TANK-binding kinase/TBK1; this interaction results in the inhibition of the association between TBK1 and IRF3, which leads to the inhibition of IRF3 activation. Interacts with host RBM24. Part of the replication complex composed of NS2, NS3, NS4A, NS4B, NS5A and the RNA-directed RNA polymerase embedded in an ER-derived membranous web. Part of the viral assembly initiation complex composed of NS2, E1, E2, NS3, NS4A, NS5A and the mature core protein. Interacts with NS3 serine protease; this interaction stabilizes the folding of NS3 serine protease. NS3-NS4A interaction is essential for NS3 activation and allows membrane anchorage of the latter. Interacts with non-structural protein 5A (via N-terminus). Part of the replication complex composed of NS2, NS3, NS4A, NS4B, NS5A and the RNA-directed RNA polymerase embedded in an ER-derived membranous web. Part of the viral assembly initiation complex composed of NS2, E1, E2, NS3, NS4A, NS5A and the mature core protein. As to quaternary structure, homomultimer. Interacts with non-structural protein NS5A. Interacts with host PLA2G4C; this interaction likely initiates the recruitment of replication complexes to lipid droplets. Interacts with host STING; this interaction disrupts the interaction between STING and TBK1 thereby suppressing the interferon signaling. Part of the replication complex composed of NS2, NS3, NS4A, NS4B, NS5A and the RNA-directed RNA polymerase embedded in an ER-derived membranous web. In terms of assembly, monomer. Homodimer; dimerization is required for RNA-binding. Interacts with the mature core protein. Interacts (via N-terminus) with non-structural protein 4A. Interacts with non-structural protein 4B. Interacts (via region D2) with RNA-directed RNA polymerase. Part of the viral assembly initiation complex composed of NS2, E1, E2, NS3, NS4A, NS5A and the mature core protein. Part of the replication complex composed of NS2, NS3, NS4A, NS4B, NS5A and the RNA-directed RNA polymerase embedded in an ER-derived membranous web. Interacts with host GRB2. Interacts with host BIN1. Interacts with host PIK3R1. Interacts with host SRCAP. Interacts with host FKBP8. Interacts (via C-terminus) with host VAPB (via MSP domain). Interacts with host EIF2AK2/PKR; this interaction leads to disruption of EIF2AK2 dimerization by NS5A and probably allows the virus to evade the innate immune response. Interacts (via N-terminus) with host PACSIN2 (via N-terminus); this interaction attenuates protein kinase C alpha-mediated phosphorylation of PACSIN2 by disrupting the interaction between PACSIN2 and PRKCA. Interacts (via N-terminus) with host SRC kinase (via SH2 domain). Interacts with most Src-family kinases. Interacts with host IFI27 and SKP2; promotes the ubiquitin-mediated proteasomal degradation of NS5A. Interacts with host GPS2. Interacts with host TNFRSF21; this interaction allows the modulation by the virus of JNK, p38 MAPK, STAT3, and Akt signaling pathways in a DR6-dependent manner. Interacts (via N-terminus) with host CIDEB (via N-terminus); this interaction seems to regulate the association of HCV particles with APOE. Interacts with host CHKA/Choline Kinase-alpha; CHKA bridges host PI4KA and NS5A and potentiates NS5A-stimulated PI4KA activity, which then facilitates the targeting of the ternary complex to the ER for viral replication. Interacts with host SPSB2 (via C-terminus); this interaction targets NS5A for ubiquitination and degradation. Interacts with host RAB18; this interaction may promote the association of NS5A and other replicase components with lipid droplets. Interacts (via region D2) with host PPIA/CYPA; the interaction stimulates RNA-binding ability of NS5A and is dependent on the peptidyl-prolyl cis-trans isomerase activity of PPIA/CYPA. Interacts with host TRIM14; this interaction induces the degradation of NS5A. Homooligomer. Interacts with non-structural protein 5A. Interacts with host VAPB. Interacts with host PRK2/PKN2. Interacts with host HNRNPA1 and SEPT6; these interactions facilitate viral replication. Part of the replication complex composed of NS2, NS3, NS4A, NS4B, NS5A and the RNA-directed RNA polymerase. Zn(2+) is required as a cofactor. It depends on Mg(2+) as a cofactor. In terms of processing, specific enzymatic cleavages in vivo yield mature proteins. The structural proteins, core, E1, E2 and p7 are produced by proteolytic processing by host signal peptidases. The core protein precursor is synthesized as a 23 kDa, which is retained in the ER membrane through the hydrophobic signal peptide. Cleavage by the signal peptidase releases the 21 kDa mature core protein. The cleavage of the core protein precursor occurs between aminoacids 176 and 188 but the exact cleavage site is not known. Some degraded forms of the core protein appear as well during the course of infection. The other proteins (p7, NS2, NS3, NS4A, NS4B, NS5A and NS5B) are cleaved by the viral proteases. Autoprocessing between NS2 and NS3 is mediated by the NS2 cysteine protease catalytic domain and regulated by the NS3 N-terminal domain. Phosphorylated by host PKC and PKA. Post-translationally, ubiquitinated; mediated by UBE3A and leading to core protein subsequent proteasomal degradation. In terms of processing, highly N-glycosylated. Palmitoylation is required for NS2/3 autoprocessing and E2 recruitment to membranes. Post-translationally, palmitoylated. This modification may play a role in its polymerization or in protein-protein interactions. In terms of processing, phosphorylated on serines in a basal form termed p56. p58 is a hyperphosphorylated form of p56. p56 and p58 coexist in the cell in roughly equivalent amounts. Hyperphosphorylation is dependent on the presence of NS4A. Host CSNK1A1/CKI-alpha or RPS6KB1 kinases may be responsible for NS5A phosphorylation. Tyrosine phosphorylation is essential for the interaction with host SRC. Post-translationally, ubiquitinated. Ubiquitination, most probably at Lys-2350, mediated by host IFI27 and SKP2 leads to proteasomal degradation, restricting viral infection. Ubiquitination by host TRIM22 leads to interruption of viral replication. In terms of processing, the N-terminus is phosphorylated by host PRK2/PKN2.

The protein resides in the host endoplasmic reticulum membrane. Its subcellular location is the host mitochondrion membrane. It is found in the virion. The protein localises to the host cytoplasm. It localises to the host nucleus. The protein resides in the host lipid droplet. Its subcellular location is the virion membrane. It is found in the host mitochondrion. The protein localises to the host cell membrane. It localises to the host perinuclear region. The enzyme catalyses Hydrolysis of four peptide bonds in the viral precursor polyprotein, commonly with Asp or Glu in the P6 position, Cys or Thr in P1 and Ser or Ala in P1'.. It carries out the reaction a ribonucleoside 5'-triphosphate + H2O = a ribonucleoside 5'-diphosphate + phosphate + H(+). The catalysed reaction is ATP + H2O = ADP + phosphate + H(+). It catalyses the reaction RNA(n) + a ribonucleoside 5'-triphosphate = RNA(n+1) + diphosphate. Its activity is regulated as follows. Inhibited by the antiviral drug hexamethylene amiloride. Inhibition by amantadine appears to be genotype-dependent. Also inhibited by long-alkyl-chain iminosugar derivatives. With respect to regulation, activity is up-regulated by PRK2/PKN2-mediated phosphorylation. In terms of biological role, packages viral RNA to form a viral nucleocapsid, and promotes virion budding. Participates in the viral particle production as a result of its interaction with the non-structural protein 5A. Binds RNA and may function as a RNA chaperone to induce the RNA structural rearrangements taking place during virus replication. Modulates viral translation initiation by interacting with viral IRES and 40S ribosomal subunit. Affects various cell signaling pathways, host immunity and lipid metabolism. Prevents the establishment of cellular antiviral state by blocking the interferon-alpha/beta (IFN-alpha/beta) and IFN-gamma signaling pathways and by blocking the formation of phosphorylated STAT1 and promoting ubiquitin-mediated proteasome-dependent degradation of STAT1. Activates STAT3 leading to cellular transformation. Regulates the activity of cellular genes, including c-myc and c-fos. May repress the promoter of p53, and sequester CREB3 and SP110 isoform 3/Sp110b in the cytoplasm. Represses cell cycle negative regulating factor CDKN1A, thereby interrupting an important check point of normal cell cycle regulation. Targets transcription factors involved in the regulation of inflammatory responses and in the immune response: suppresses TNF-induced NF-kappa-B activation, and activates AP-1. Binds to dendritic cells (DCs) via C1QR1, resulting in down-regulation of T-lymphocytes proliferation. Alters lipid metabolism by interacting with hepatocellular proteins involved in lipid accumulation and storage. Induces up-regulation of FAS promoter activity, and thereby contributes to the increased triglyceride accumulation in hepatocytes (steatosis). Forms a heterodimer with envelope glycoprotein E2, which mediates virus attachment to the host cell, virion internalization through clathrin-dependent endocytosis and fusion with host membrane. Fusion with the host cell is most likely mediated by both E1 and E2, through conformational rearrangements of the heterodimer required for fusion rather than a classical class II fusion mechanism. E1/E2 heterodimer binds host apolipoproteins such as APOB and ApoE thereby forming a lipo-viro-particle (LVP). APOE associated to the LVP allows the initial virus attachment to cell surface receptors such as the heparan sulfate proteoglycans (HSPGs), syndecan-1 (SDC1), syndecan-1 (SDC2), the low-density lipoprotein receptor (LDLR) and scavenger receptor class B type I (SCARB1). The cholesterol transfer activity of SCARB1 allows E2 exposure and binding of E2 to SCARB1 and the tetraspanin CD81. E1/E2 heterodimer binding on CD81 activates the epithelial growth factor receptor (EGFR) signaling pathway. Diffusion of the complex E1-E2-EGFR-SCARB1-CD81 to the cell lateral membrane allows further interaction with Claudin 1 (CLDN1) and occludin (OCLN) to finally trigger HCV entry. Functionally, forms a heterodimer with envelope glycoprotein E1, which mediates virus attachment to the host cell, virion internalization through clathrin-dependent endocytosis and fusion with host membrane. Fusion with the host cell is most likely mediated by both E1 and E2, through conformational rearrangements of the heterodimer required for fusion rather than a classical class II fusion mechanism. The interaction between envelope glycoprotein E2 and host apolipoprotein E/APOE allows the proper assembly, maturation and infectivity of the viral particles. This interaction is probably promoted via the up-regulation of cellular autophagy by the virus. E1/E2 heterodimer binds host apolipoproteins such as APOB and APOE thereby forming a lipo-viro-particle (LVP). APOE associated to the LVP allows the initial virus attachment to cell surface receptors such as the heparan sulfate proteoglycans (HSPGs), syndecan-1 (SDC1), syndecan-1 (SDC2), the low-density lipoprotein receptor (LDLR) and scavenger receptor class B type I (SCARB1). The cholesterol transfer activity of SCARB1 allows E2 exposure and binding of E2 to SCARB1 and the tetraspanin CD81. E1/E2 heterodimer binding on CD81 activates the epithelial growth factor receptor (EGFR) signaling pathway. Diffusion of the complex E1-E2-EGFR-SCARB1-CD81 to the cell lateral membrane allows further interaction with Claudin 1 (CLDN1) and occludin (OCLN) to finally trigger HCV entry. Inhibits host EIF2AK2/PKR activation, preventing the establishment of an antiviral state. Viral ligand for CD209/DC-SIGN and CLEC4M/DC-SIGNR, which are respectively found on dendritic cells (DCs), and on liver sinusoidal endothelial cells and macrophage-like cells of lymph node sinuses. These interactions allow the capture of circulating HCV particles by these cells and subsequent facilitated transmission to permissive cells such as hepatocytes and lymphocyte subpopulations. The interaction between E2 and host amino acid transporter complex formed by SLC3A2 and SLC7A5/LAT1 may facilitate viral entry into host cell. Its function is as follows. Ion channel protein that acts as a viroporin and plays an essential role in the assembly, envelopment and secretion of viral particles. Regulates the host cell secretory pathway, which induces the intracellular retention of viral glycoproteins and favors assembly of viral particles. Creates a pore in acidic organelles and releases Ca(2+) and H(+) in the cytoplasm of infected cells, leading to a productive viral infection. High levels of cytoplasmic Ca(2+) may trigger membrane trafficking and transport of viral ER-associated proteins to viroplasms, sites of viral genome replication. This ionic imbalance induces the assembly of the inflammasome complex, which triggers the maturation of pro-IL-1beta into IL-1beta through the action of caspase-1. Targets also host mitochondria and induces mitochondrial depolarization. In addition of its role as a viroporin, acts as a lipid raft adhesion factor. In terms of biological role, cysteine protease required for the proteolytic auto-cleavage between the non-structural proteins NS2 and NS3. The N-terminus of NS3 is required for the function of NS2 protease (active region NS2-3). Promotes the initiation of viral particle assembly by mediating the interaction between structural and non-structural proteins. Displays three enzymatic activities: serine protease with a chymotrypsin-like fold, NTPase and RNA helicase. NS3 serine protease, in association with NS4A, is responsible for the cleavages of NS3-NS4A, NS4A-NS4B, NS4B-NS5A and NS5A-NS5B. The NS3/NS4A complex prevents phosphorylation of host IRF3, thus preventing the establishment of dsRNA induced antiviral state. The NS3/NS4A complex induces host amino acid transporter component SLC3A2, thus contributing to HCV propagation. NS3 RNA helicase binds to RNA and unwinds both dsDNA and dsRNA in the 3' to 5' direction, and likely resolves RNA complicated stable secondary structures in the template strand. Binds a single ATP and catalyzes the unzipping of a single base pair of dsRNA. Inhibits host antiviral proteins TBK1 and IRF3 thereby preventing the establishment of an antiviral state. Cleaves host MAVS/CARDIF thereby preventing the establishment of an antiviral state. Cleaves host TICAM1/TRIF, thereby disrupting TLR3 signaling and preventing the establishment of an antiviral state. Functionally, induces a specific membrane alteration that serves as a scaffold for the virus replication complex. This membrane alteration gives rise to the so-called ER-derived membranous web that contains the replication complex. NS4B self-interaction contributes to its function in membranous web formation. Promotes host TRIF protein degradation in a CASP8-dependent manner thereby inhibiting host TLR3-mediated interferon signaling. Disrupts the interaction between STING and TBK1 contributing to the inhibition of interferon signaling. Its function is as follows. Phosphorylated protein that is indispensable for viral replication and assembly. Both hypo- and hyperphosphorylated states are required for the viral life cycle. The hyperphosphorylated form of NS5A is an inhibitor of viral replication. Involved in RNA-binding and especially in binding to the viral genome. Zinc is essential for RNA-binding. Participates in the viral particle production as a result of its interaction with the mature viral core protein. Its interaction with host VAPB may target the viral replication complex to vesicles. Down-regulates viral IRES translation initiation. Mediates interferon resistance, presumably by interacting with and inhibiting host EIF2AK2/PKR. Prevents BIN1-induced apoptosis. Acts as a transcriptional activator of some host genes important for viral replication when localized in the nucleus. Via the interaction with host PACSIN2, modulates lipid droplet formation in order to promote virion assembly. Modulates TNFRSF21/DR6 signaling pathway for viral propagation. In terms of biological role, RNA-dependent RNA polymerase that performs primer-template recognition and RNA synthesis during viral replication. Initiates RNA transcription/replication at a flavin adenine dinucleotide (FAD), resulting in a 5'- FAD cap on viral RNAs. In this way, recognition of viral 5' RNA by host pattern recognition receptors can be bypassed, thereby evading activation of antiviral pathways. Peptide cofactor which forms a non-covalent complex with the N-terminal of NS3 serine protease. The NS3/NS4A complex prevents phosphorylation of host IRF3, thus preventing the establishment of dsRNA induced antiviral state. The NS3/NS4A complex induces host amino acid transporter component SLC3A2, thus contributing to HCV propagation. The polypeptide is Genome polyprotein (Homo sapiens (Human)).